Reading from the N-terminus, the 737-residue chain is Probable serine/threonine-protein kinase DDB_G0269628 (737 aa).

Positions 8–488 (YKLIKDLRSG…TLQKMDTSLL (481 aa)) constitute a Protein kinase domain. ATP contacts are provided by residues 14–22 (LRSGGEGKA) and K36. 2 disordered regions span residues 155–251 (NTIQ…KKCS) and 278–298 (TTAATTTTTTNTTHSSSSSSN). Over residues 156–167 (TIQHSHSSSSLV) the composition is skewed to polar residues. Positions 168 to 229 (NGTTSPTNAT…PSSPSSPLSP (62 aa)) are enriched in low complexity. D349 (proton acceptor) is an active-site residue.

This sequence belongs to the protein kinase superfamily. NEK Ser/Thr protein kinase family. NIMA subfamily.

The catalysed reaction is L-seryl-[protein] + ATP = O-phospho-L-seryl-[protein] + ADP + H(+). It carries out the reaction L-threonyl-[protein] + ATP = O-phospho-L-threonyl-[protein] + ADP + H(+). This is Probable serine/threonine-protein kinase DDB_G0269628 from Dictyostelium discoideum (Social amoeba).